The following is a 315-amino-acid chain: Small ribosomal subunit protein uS9m (315 aa).

The transit peptide at 1–42 (MMASLRHSITSALRSSRQGCSKSAQWQSLDQQFGALRISSRS) directs the protein to the mitochondrion. Positions 293–315 (PRKVERKKHGHVKARKMPTWVKR) are disordered. Residues 296 to 315 (VERKKHGHVKARKMPTWVKR) are compositionally biased toward basic residues.

Belongs to the universal ribosomal protein uS9 family. Component of the mitochondrial small ribosomal subunit (mt-SSU). Mature N.crassa 74S mitochondrial ribosomes consist of a small (37S) and a large (54S) subunit. The 37S small subunit contains a 16S ribosomal RNA (16S mt-rRNA) and 32 different proteins. The 54S large subunit contains a 23S rRNA (23S mt-rRNA) and 42 different proteins.

It localises to the mitochondrion. Its function is as follows. Component of the mitochondrial ribosome (mitoribosome), a dedicated translation machinery responsible for the synthesis of mitochondrial genome-encoded proteins, including at least some of the essential transmembrane subunits of the mitochondrial respiratory chain. The mitoribosomes are attached to the mitochondrial inner membrane and translation products are cotranslationally integrated into the membrane. The sequence is that of Small ribosomal subunit protein uS9m (mrp-9) from Neurospora crassa (strain ATCC 24698 / 74-OR23-1A / CBS 708.71 / DSM 1257 / FGSC 987).